Here is a 251-residue protein sequence, read N- to C-terminus: MAEPTEKRLVSETGVAARVAQIVEGPIEGLGFRLVRVKISNTNGRTVQIMAERPDGTMGVDECEAVSRAISPILDLEDPVGDAYYLEVSSPGIDRPLVRVSDFERWAGYEAKVELAVPMDGRKRFRGIIGVPSADGTTVPIDLPDVKPGLPSRIDVPLRDLGEAHLVLTDELIRESLRRGSAPPQDGEEGDEEEGAEAEHEAPQVRFIPQPKRPKPKLDKKSDKPVKAKKPKPGGGIVTKAARLKNRDTLH.

Residues Ser-176–His-251 form a disordered region. A compositionally biased stretch (acidic residues) spans Asp-186 to Ala-196. Positions Pro-216–Val-226 are enriched in basic and acidic residues.

The protein belongs to the RimP family.

Its subcellular location is the cytoplasm. In terms of biological role, required for maturation of 30S ribosomal subunits. This is Ribosome maturation factor RimP from Methylorubrum extorquens (strain PA1) (Methylobacterium extorquens).